The chain runs to 664 residues: E3 ubiquitin-protein ligase RNF139 (664 aa).

Alanine 2 is subject to N-acetylalanine. The next 12 membrane-spanning stretches (helical) occupy residues 51–71, 85–105, 125–145, 154–174, 178–198, 293–313, 323–343, 356–376, 390–410, 420–440, 469–489, and 495–512; these read IVLQIFLRLLGIFVSSIVLIL, AFLLAATSVLVNYYASLHIDF, SLWMALIVLQLTFGIGYVTLL, LIILDLLVPVIGLITELPLHI, LVFTSSLILTLNTVLVLAVKL, GMSAVISSVAHYLGLGILAFI, LGFVAPVLFFILALQTGLSGL, MCLLLTAVLHFIHGMTDPVLM, FPVLFVSACLFILPVLLSYVL, LFAATAFCVELCLKVIVSLTV, SIIVFIFGVVMFGNGAYTMMF, and IRAFMMCLHAYFNIYLQA. The RING-type; atypical zinc finger occupies 547-586; it reads CAICYHEFTTSARITPCNHYFHALCLRKWLYIQDTCPMCH. The span at 599-610 shows a compositional bias: polar residues; that stretch reads SNVSNNNGFTPP. The interval 599-664 is disordered; sequence SNVSNNNGFT…AAEEFNDDTD (66 aa). The segment covering 616–628 has biased composition (basic and acidic residues); the sequence is EAVREAAAESDRE. Residues 629–639 are compositionally biased toward acidic residues; the sequence is LNEDDSTDCDD. At serine 634 the chain carries Phosphoserine. Phosphothreonine is present on residues threonine 635 and threonine 663.

In terms of assembly, interacts with VHL. Interacts with MHC class I and HM13. Component of SCAP-SREBP complex composed of SREBF2, SCAP and RNF139; the complex hampers the interaction between SCAP and SEC24B, thereby reducing SREBF2 proteolytic processing. Interacts with SREBF2 (via C-terminal domain). Interacts with SCAP; the interaction inhibits the interaction of SCAP with SEC24B and hampering the ER to Golgi transport of the SCAP-SREBP complex. Interacts with SEC24B. Interacts with INSIG1 and INSIG2. Interacts with EIF3F and EIF3H; the interaction leads to protein translation inhibitions in a ubiquitination-dependent manner. Interacts with XBP1; the interaction induces ubiquitination and degradation of XBP1. Interacts with AUP1, AMFR and UBE2G2; interaction with AUP1 facilitates interaction of RNF139 with ubiquitin-conjugating enzyme UBE2G2 and ubiquitin ligase AMFR/gp78, leading to sterol-induced ubiquitination of HMGCR and its subsequent proteasomal degradation. Post-translationally, autoubiquitinated. Ubiquitination is induced by sterol and leads to ist degradation via the ubiquitin-proteasome pathway.

It localises to the endoplasmic reticulum membrane. The enzyme catalyses S-ubiquitinyl-[E2 ubiquitin-conjugating enzyme]-L-cysteine + [acceptor protein]-L-lysine = [E2 ubiquitin-conjugating enzyme]-L-cysteine + N(6)-ubiquitinyl-[acceptor protein]-L-lysine.. It participates in protein modification; protein ubiquitination. Its function is as follows. E3-ubiquitin ligase; acts as a negative regulator of cell proliferation through mechanisms involving G2/M arrest and cell death. Required for MHC class I ubiquitination in cells expressing the cytomegalovirus protein US2 before dislocation from the endoplasmic reticulum (ER). Affects SREBP processing by hindering the SREBP-SCAP complex translocation from the ER to the Golgi, thereby reducing SREBF2 target gene expression. Involved in the sterol-accelerated degradation of HMGCR. This is achieved through binding to INSIG1 and/or INSIG2 at the ER membrane. In addition, interaction of RNF139 with AUP1 facilitates interaction of RNF139 with ubiquitin-conjugating enzyme UBE2G2 and ubiquitin ligase AMFR, leading to ubiquitination of HMGCR. The ubiquitinated HMGCR is then released from the ER by the complex into the cytosol for subsequent destruction. Required for INSIG1 ubiquitination. May be required for EIF3 complex ubiquitination. This is E3 ubiquitin-protein ligase RNF139 (RNF139) from Pongo abelii (Sumatran orangutan).